We begin with the raw amino-acid sequence, 723 residues long: Threonine--tRNA ligase, mitochondrial (723 aa).

Serine 57 is subject to Phosphoserine. Residues 64–126 (RAIKISLPEG…ETDCHLRFLT (63 aa)) enclose the TGS domain.

This sequence belongs to the class-II aminoacyl-tRNA synthetase family. Homodimer.

It localises to the mitochondrion matrix. The catalysed reaction is tRNA(Thr) + L-threonine + ATP = L-threonyl-tRNA(Thr) + AMP + diphosphate + H(+). Catalyzes the attachment of threonine to tRNA(Thr) in a two-step reaction: threonine is first activated by ATP to form Thr-AMP and then transferred to the acceptor end of tRNA(Thr). Also edits incorrectly charged tRNA(Thr) via its editing domain. The protein is Threonine--tRNA ligase, mitochondrial (Tars2) of Mus musculus (Mouse).